The following is an 80-amino-acid chain: Small ribosomal subunit protein uS17 (80 aa).

It belongs to the universal ribosomal protein uS17 family. In terms of assembly, part of the 30S ribosomal subunit.

Functionally, one of the primary rRNA binding proteins, it binds specifically to the 5'-end of 16S ribosomal RNA. The protein is Small ribosomal subunit protein uS17 of Brucella anthropi (strain ATCC 49188 / DSM 6882 / CCUG 24695 / JCM 21032 / LMG 3331 / NBRC 15819 / NCTC 12168 / Alc 37) (Ochrobactrum anthropi).